We begin with the raw amino-acid sequence, 703 residues long: Glycine--tRNA ligase beta subunit (703 aa).

This sequence belongs to the class-II aminoacyl-tRNA synthetase family. As to quaternary structure, tetramer of two alpha and two beta subunits.

The protein localises to the cytoplasm. It carries out the reaction tRNA(Gly) + glycine + ATP = glycyl-tRNA(Gly) + AMP + diphosphate. In Myxococcus xanthus (strain DK1622), this protein is Glycine--tRNA ligase beta subunit.